The following is a 139-amino-acid chain: uncharacterized protein (139 aa).

The region spanning 9-133 is the VOC domain; it reads QAAQIRIARP…DGWRIVFMNS (125 aa).

This is an uncharacterized protein from Bacillus subtilis (strain 168).